A 233-amino-acid polypeptide reads, in one-letter code: Ribonuclease 3 (233 aa).

An RNase III domain is found at 4–126 (LNKLMERLGH…IVGAIYIDAG (123 aa)). E39 contacts Mg(2+). Residue D43 is part of the active site. Positions 112 and 115 each coordinate Mg(2+). E115 is a catalytic residue. The DRBM domain maps to 153-222 (DAKSLLQEWL…AKRFLELLDD (70 aa)).

This sequence belongs to the ribonuclease III family. As to quaternary structure, homodimer. The cofactor is Mg(2+).

It is found in the cytoplasm. The enzyme catalyses Endonucleolytic cleavage to 5'-phosphomonoester.. Digests double-stranded RNA. Involved in the processing of primary rRNA transcript to yield the immediate precursors to the large and small rRNAs (23S and 16S). Processes some mRNAs, and tRNAs when they are encoded in the rRNA operon. Processes pre-crRNA and tracrRNA of type II CRISPR loci if present in the organism. The sequence is that of Ribonuclease 3 from Coxiella burnetii (strain CbuK_Q154) (Coxiella burnetii (strain Q154)).